A 204-amino-acid polypeptide reads, in one-letter code: Guanylate kinase (204 aa).

A Guanylate kinase-like domain is found at 16–196; it reads AKVIIFSAPS…AKAHALKVIK (181 aa). 23–30 contributes to the ATP binding site; sequence APSGSGKS.

It belongs to the guanylate kinase family.

It localises to the cytoplasm. It carries out the reaction GMP + ATP = GDP + ADP. In terms of biological role, essential for recycling GMP and indirectly, cGMP. This is Guanylate kinase from Bacteroides fragilis (strain ATCC 25285 / DSM 2151 / CCUG 4856 / JCM 11019 / LMG 10263 / NCTC 9343 / Onslow / VPI 2553 / EN-2).